The primary structure comprises 957 residues: Leucine--tRNA ligase (957 aa).

The short motif at 70-81 (PYPSGAGLHVGH) is the 'HIGH' region element. Residues 727–731 (KMGKS) carry the 'KMSKS' region motif. Residue K730 coordinates ATP.

It belongs to the class-I aminoacyl-tRNA synthetase family.

The protein localises to the cytoplasm. It carries out the reaction tRNA(Leu) + L-leucine + ATP = L-leucyl-tRNA(Leu) + AMP + diphosphate. The polypeptide is Leucine--tRNA ligase (Corynebacterium efficiens (strain DSM 44549 / YS-314 / AJ 12310 / JCM 11189 / NBRC 100395)).